Consider the following 242-residue polypeptide: Aliphatic sulfonates import ATP-binding protein SsuB 1 (242 aa).

The ABC transporter domain maps to 11–227 (VAVRRLSRAF…RPSHPDFEDL (217 aa)). Residue 43 to 50 (GESGSGKT) coordinates ATP.

Belongs to the ABC transporter superfamily. Aliphatic sulfonates importer (TC 3.A.1.17.2) family. As to quaternary structure, the complex is composed of two ATP-binding proteins (SsuB), two transmembrane proteins (SsuC) and a solute-binding protein (SsuA).

Its subcellular location is the cell inner membrane. It carries out the reaction ATP + H2O + aliphatic sulfonate-[sulfonate-binding protein]Side 1 = ADP + phosphate + aliphatic sulfonateSide 2 + [sulfonate-binding protein]Side 1.. Part of the ABC transporter complex SsuABC involved in aliphatic sulfonates import. Responsible for energy coupling to the transport system. This is Aliphatic sulfonates import ATP-binding protein SsuB 1 from Paracoccus denitrificans (strain Pd 1222).